The sequence spans 229 residues: Transcriptional regulatory protein CreB (229 aa).

The region spanning 5–119 is the Response regulatory domain; it reads TVWLVEDEQG…EVCARVRTLL (115 aa). Asp-54 carries the post-translational modification 4-aspartylphosphate. A DNA-binding region (ompR/PhoB-type) is located at residues 129–228; that stretch reads SPVIRIGHFE…HRGMGYSLRG (100 aa).

Phosphorylated by CreC.

It is found in the cytoplasm. In terms of biological role, member of the two-component regulatory system CreC/CreB involved in catabolic regulation. The sequence is that of Transcriptional regulatory protein CreB (creB) from Escherichia coli (strain K12).